Consider the following 473-residue polypeptide: MKLSFIASPVWALALAQFAAATQVKIDVDVAIFGGGSAGIHAAIQLRDAGATVAVIEKKSQIGGHAETYTDPQGKSTNVGVVVFDNIEVASNYFARLNVSIVRGSPLGTAGPTYTYDFTSGAQIPAVNTSAEAQQQLTAALQSYSTNVLSKYPWIDEGFLVPDPVPEELTIPFGELAQKYNFTALMPTIAMYNYFTGDLSTIPSLYGIKGLGQGALKNLFGSFILPASGKTRDLYDAAAIELGNSVLLNADVVKVQRDVRINSTTTGVTVLIQQPGQPPKLIRARKLLVAAPPTLENVGAFDLTAEERGLISKFSSLGCWASVANVPGLNVTLKNYGVHMPYNQPSIPGPYGFVAYGSPNNFLVTVGLPDAANTAAKGEAVVRQSLATLSAVGAVPADALEKLTFPFSAVHSPYSLRVSAEEIKAGFYSKFLALEGARNTYWTGAVWAGHNSALIWNFNMGTVLPGLKKDLGL.

The first 21 residues, Met1–Ala21, serve as a signal peptide directing secretion. N-linked (GlcNAc...) asparagine glycosylation is found at Asn98, Asn128, Asn181, Asn262, and Asn330.

The protein belongs to the beta-cyclopiazonate dehydrogenase family. It depends on FAD as a cofactor.

It participates in secondary metabolite biosynthesis; terpenoid biosynthesis. Its function is as follows. FAD-dependent oxidoreductase; part of the gene cluster that mediates the biosynthesis of the diterpenoid pyrones higginsianins A and B. The first step of the pathway is the synthesis of the alpha-pyrone moiety by the polyketide synthase dpchA via condensation of one acetyl-CoA starter unit with 3 malonyl-CoA units and 2 methylations. The alpha-pyrone is then combined with geranylgeranyl pyrophosphate (GGPP) formed by the GGPP synthase dpchD through the action of the prenyltransferase dpchC to yield a linear alpha-pyrone diterpenoid. Subsequent steps in the diterpenoid pyrone biosynthetic pathway involve the decalin core formation, which is initiated by the epoxidation of the C10-C11 olefin by the FAD-dependent oxidoreductase dpchE, and is followed by a cyclization cascade catalyzed by the terpene cyclase dpchB. The short chain dehydrogenase/reductase dpchG then oxidizes the 8S hydroxy group to a ketone and the short chain dehydrogenase/reductase dpchH reduces the ketone to the 8R hydroxy group to yield higginsianin B. Finally, the FAD-dependent oxidoreductase dpchF converts higginsianin B into higginsianin A. In Colletotrichum higginsianum (strain IMI 349063) (Crucifer anthracnose fungus), this protein is FAD-dependent oxidoreductase dpchF.